The primary structure comprises 54 residues: Large ribosomal subunit protein bL32c (54 aa).

The protein belongs to the bacterial ribosomal protein bL32 family.

Its subcellular location is the plastid. It localises to the chloroplast. In Helianthus annuus (Common sunflower), this protein is Large ribosomal subunit protein bL32c.